The sequence spans 465 residues: MSERREEERGRTGFSMKKNHNSNFNRRNQEQIHQKLPTKISGPLTLEQLCAYQHMFRIQEISSIIKSHSFEVPNARNRSPSPPPVYDAEGKRINTREQLYKKKLMNERFKLVEVVSKLIPGYSAPKDYKRPTTFQEKYYIPVSQYPQINFVGLLLGPRGKTLRKMQEDSGCKIAIRGRGSVKEGKTSSDLPPGAMDFSDPLHCLIIADNEEKIENGIKACRNIVIKAVTSPEGQNELKRGQLRELAELNGTLREDNRPCATCGQQGHKKYECPHRETFAMKIICRRCNQPGHTIRDCTSDSNYGKQIHSSRYNNEMPYHRTSTAVDQPSAYSRYGYTPRNHNGSSRFNDNSKYLNNGNKRATPQPELELETSHKRQQINPTSSSQDTLSHQTNHMTMTTIEDSGIDKLQLPAGMSNENPIPQPVNFNEIQINDVSGPNGTLEAPPGLDLGNNDSNITLQGPPGLN.

Basic and acidic residues predominate over residues 1 to 11; that stretch reads MSERREEERGR. The interval 1 to 22 is disordered; it reads MSERREEERGRTGFSMKKNHNS. The 67-residue stretch at 139 to 205 folds into the KH domain; sequence YIPVSQYPQI…DFSDPLHCLI (67 aa). 2 consecutive CCHC-type zinc fingers follow at residues 257–274 and 282–299; these read RPCATCGQQGHKKYECPH and IICRRCNQPGHTIRDCTS. Disordered regions lie at residues 324–391 and 431–465; these read AVDQ…LSHQ and INDVSGPNGTLEAPPGLDLGNNDSNITLQGPPGLN. Composition is skewed to polar residues over residues 339 to 361 and 377 to 391; these read RNHNGSSRFNDNSKYLNNGNKRA and QINPTSSSQDTLSHQ.

Belongs to the BBP/SF1 family.

It is found in the nucleus. Necessary for the splicing of pre-mRNA. Has a role in the recognition of the branch site (5'-UACUAAC-3'), the pyrimidine tract and the 3'-splice site at the 3'-end of introns. This chain is Branchpoint-bridging protein (BBP), found in Candida glabrata (strain ATCC 2001 / BCRC 20586 / JCM 3761 / NBRC 0622 / NRRL Y-65 / CBS 138) (Yeast).